The chain runs to 227 residues: Glutathione S-transferase U27 (227 aa).

The region spanning E4–K84 is the GST N-terminal domain. Residues S14–M15, Q41–K42, K55–I56, and E68–S69 each bind glutathione. The region spanning D92–I217 is the GST C-terminal domain.

It belongs to the GST superfamily. Tau family.

The protein localises to the cytoplasm. Its subcellular location is the cytosol. The catalysed reaction is RX + glutathione = an S-substituted glutathione + a halide anion + H(+). In terms of biological role, may be involved in the conjugation of reduced glutathione to a wide number of exogenous and endogenous hydrophobic electrophiles and have a detoxification role against certain herbicides. In Arabidopsis thaliana (Mouse-ear cress), this protein is Glutathione S-transferase U27 (GSTU27).